The following is a 402-amino-acid chain: Endoplasmic reticulum junction formation protein lunapark-B (402 aa).

The Cytoplasmic segment spans residues 1-45 (MGAIISRWKTKPSTVELLESLDKDIKDLEEFRAKNQRLLKLWVGR). A helical membrane pass occupies residues 46-66 (LLFYSSALYLLTCLCVYYLYF). Residues 67 to 77 (PQQWGARLITA) lie on the Lumenal side of the membrane. The chain crosses the membrane as a helical span at residues 78 to 98 (LPLLAFPALVLLLRKMLIFLF). The Cytoplasmic portion of the chain corresponds to 99 to 402 (SKRTERNNDK…EEQKKEDESN (304 aa)). A coiled-coil region spans residues 100–128 (KRTERNNDKLEDLKTQKRKILEEVMETET). Positions 142-240 (ESKKKAEAEA…PGPGSGMRPP (99 aa)) are disordered. Residues 205 to 222 (SASTPAGASQAETPQQMM) show a composition bias toward polar residues. The segment at 276-301 (CQQCFSHNGMALKEEFEFVAFRCAYC) adopts a C4-type; plays a role in ER morphology zinc-finger fold. A disordered region spans residues 311–402 (RPQAPRLPEF…EEQKKEDESN (92 aa)). Positions 321 to 330 (SFERRLRSES) are enriched in basic and acidic residues. Residues 341 to 352 (TPEDSDAPEDDM) show a composition bias toward acidic residues. Positions 385–402 (PHAEAEALEEQKKEDESN) are enriched in basic and acidic residues.

The protein belongs to the lunapark family. In terms of assembly, homodimer; homodimerization requires the C4-type zinc finger motif and decreases during mitosis in a phosphorylation-dependent manner. In terms of processing, phosphorylated. Phosphorylation occurs during interphase. Phosphorylation also occurs during mitosis; these phosphorylations reduce both its homodimerization and the ER three-way tubular junction formation.

Its subcellular location is the endoplasmic reticulum membrane. Its function is as follows. Endoplasmic reticulum (ER)-shaping membrane protein that plays a role in determining ER morphology. Involved in the stabilization of nascent three-way ER tubular junctions within the ER network. May also play a role as a curvature-stabilizing protein within three-way ER tubular junction network. The sequence is that of Endoplasmic reticulum junction formation protein lunapark-B (lnpkb) from Danio rerio (Zebrafish).